A 654-amino-acid polypeptide reads, in one-letter code: Insulin receptor substrate 1 (654 aa).

In terms of domain architecture, PH spans D3–A107. A Phosphotyrosine modification is found at Y36. An IRS-type PTB domain is found at F126–F230. A disordered region spans residues E228 to E329. Positions K235–S245 are enriched in polar residues. Residue S276 is modified to Phosphoserine. The span at N307–Y321 shows a compositional bias: polar residues. Y345 bears the Phosphotyrosine; by INSR mark. Short sequence motifs (YXXM motif) lie at residues Y345–M348, Y384–M387, Y398–M401, Y411–M414, Y430–M433, and Y466–M469. Y398 and Y411 each carry phosphotyrosine; by INSR. Residue Y430 is modified to Phosphotyrosine. Disordered regions lie at residues S473–C494 and Y507–G532. A compositionally biased stretch (low complexity) spans S514–D524. Position 563 is a phosphotyrosine; by INSR (Y563).

Interacts with the NPXY motif of tyrosine-phosphorylated igf1r and insr via the PTB domain. Binds to phosphatidylinositol 3-kinase p85 subunit via the phosphorylated YXXM motifs.

Functionally, may mediate the control of various cellular processes by insulin. When phosphorylated by the insulin receptor binds specifically to various cellular proteins containing SH2 domains such as phosphatidylinositol 3-kinase p85 subunit or grb2. Activates phosphatidylinositol 3-kinase when bound to the regulatory p85 subunit. The protein is Insulin receptor substrate 1 of Xenopus tropicalis (Western clawed frog).